The following is a 152-amino-acid chain: Transcriptional regulator MraZ (152 aa).

SpoVT-AbrB domains lie at 5-52 (ATLV…PLPE) and 81-124 (ASEC…DETT).

Belongs to the MraZ family. As to quaternary structure, forms oligomers.

Its subcellular location is the cytoplasm. It localises to the nucleoid. Functionally, negatively regulates its own expression and that of the subsequent genes in the proximal part of the division and cell wall (dcw) gene cluster. Acts by binding directly to DNA. May also regulate the expression of genes outside the dcw cluster. The chain is Transcriptional regulator MraZ from Salmonella typhi.